Reading from the N-terminus, the 347-residue chain is P2Y purinoceptor 12 (347 aa).

Topologically, residues 1 to 33 are extracellular; the sequence is MDVPGVNTTSANTTFSPGTSTLCVRDYKITQVL. Residues N7 and N12 are each glycosylated (N-linked (GlcNAc...) asparagine). Cystine bridges form between C23-C276 and C103-C181. Residues 34–56 form a helical membrane-spanning segment; sequence FPLLYTVLFFAGLITNSLAMRIF. Over 57–67 the chain is Cytoplasmic; the sequence is FQIRSKSNFII. A phosphoserine mark is found at S61 and S63. The chain crosses the membrane as a helical span at residues 68–88; the sequence is FLKNTVISDLLMILTFPFKIL. At 89–103 the chain is on the extracellular side; that stretch reads SDAKLGAGPLRTLVC. ADP-binding residues include R99, C103, and Y111. Residues 104–124 form a helical membrane-spanning segment; that stretch reads QVTSVTFYFTMYISISFLGLI. Topologically, residues 125 to 148 are cytoplasmic; sequence TIDRYLKTTRPFKTSSPSNLLGAK. The helical transmembrane segment at 149 to 168 threads the bilayer; that stretch reads ILSVVIWAFMFLISLPNMIL. Residues 162-165, 181-185, H193, and N197 each bind ADP; these read SLPN and CSFLK. Residues 169 to 191 are Extracellular-facing; sequence TNRRPKDKDVTKCSFLKSEFGLV. The helical transmembrane segment at 192-213 threads the bilayer; that stretch reads WHEIVNYICQVIFWINFLIVIV. At 214 to 239 the chain is on the cytoplasmic side; the sequence is CYSLITKELYRSYVRTRGSAKVPKKK. The helical transmembrane segment at 240 to 265 threads the bilayer; the sequence is VNVKVFIIIAVFFICFVPFHFARIPY. Residues 262-265, Q269, and K286 each bind ADP; that span reads RIPY. Residues 266–284 lie on the Extracellular side of the membrane; the sequence is TLSQTRAVFDCSAENTLFY. A helical membrane pass occupies residues 285–304; the sequence is VKESTLWLTSLNACLDPFIY. Residues 305 to 347 lie on the Cytoplasmic side of the membrane; sequence FFLCKSFRNSLTSMLRCSNSTSTSGTNKKKGQEGGEPSEETPM. Residues 321-347 are disordered; sequence CSNSTSTSGTNKKKGQEGGEPSEETPM.

This sequence belongs to the G-protein coupled receptor 1 family.

Its subcellular location is the cell membrane. In terms of biological role, receptor for ADP and ATP coupled to G-proteins that inhibit the adenylyl cyclase second messenger system. Required for normal platelet aggregation and blood coagulation. The chain is P2Y purinoceptor 12 (P2ry12) from Mus musculus (Mouse).